A 443-amino-acid chain; its full sequence is Diels-Alderase poxQ (443 aa).

The N-terminal stretch at 1–23 (MARIPLEFLSITLPVLLLAYCLA) is a signal peptide. Residues Asn78, Asn97, and Asn145 are each glycosylated (N-linked (GlcNAc...) asparagine).

Belongs to the Diels-Alderase family.

Its pathway is secondary metabolite biosynthesis. In terms of biological role, diels-Alderase; part of the gene cluster that mediates the biosynthesis of oxaleimides, cytotoxic compounds containing an unusual disubstituted succinimide moiety. The first step of the pathway is provided by the HR-PKS poxF that serves in a new mode of collaborative biosynthesis with the PKS-NRPS poxE, by providing the olefin containing amino acid substrate via the synthesis of an ACP-bound dec-4-enoate. The cytochrome P450 monooxygenase poxM-catalyzed oxidation at the alpha-position creates the enzyme-bound 2-hydroxydec-4-enoyl-ACP thioester, which may be prone to spontaneous hydrolysis to yield 2-hydroxydec-4-enoic acid due to increased electrophilicity of the carbonyl. 2-hydroxydec-4-enoic acid can then be further oxidized by poxM to yield the alpha-ketoacid 2-oxodec-4-enoicacid, which is reductively aminated by the aminotransferase poxL to yield (S,E)-2-aminodec-4-enoic acid. The Hybrid PKS-NRPS synthetase poxE then performs condensation between the octaketide product of its PKS modules and the amino group of (S,E)-2-aminodec-4-enoic acid which is activated and incorporated by the adenylation domain. The resulting aminoacyl product can be cyclized by the Diels-Alderase PoxQ and reductively released by the reductive (R) domain of poxE to yield an aldehyde intermediate. The released aldehyde is then substrate for a Knoevenagel condensation by the hydrolyase poxO followed by an oxidation at the 5-position of the pyrrolidone ring. The presence of the olefin from the amino acid building block allows for migration of the substituted allyl group to occur. This allylic transposition reaction takes place in a conjugate addition, semipinacol-like fashion to yield a succinimide intermediate. Iterative two-electron oxidations of the C7 methyl of the succinimide intermediate to the carboxylic acid can be catalyzed by one of two remaining cytochrome P450 monooxygenasess poxC or poxD to yield oxaleimide A. Subsequent oxidation yields the maleimide scaffold oxaleimide I. Both oxaleimide A and oxaleimide I can undergo oxidative modifications in the decalin ring to yield the series of products oxaleimides B to H. The sequence is that of Diels-Alderase poxQ from Penicillium oxalicum.